A 171-amino-acid polypeptide reads, in one-letter code: Phosphopantetheine adenylyltransferase (171 aa).

Thr9 provides a ligand contact to substrate. Residues 9-10 and His17 each bind ATP; that span reads TF. Lys41, Leu73, and Arg87 together coordinate substrate. ATP is bound by residues 88-90, Glu98, and 123-129; these read GLR and YQFISGT.

It belongs to the bacterial CoaD family. As to quaternary structure, homohexamer. Mg(2+) serves as cofactor.

It localises to the cytoplasm. The catalysed reaction is (R)-4'-phosphopantetheine + ATP + H(+) = 3'-dephospho-CoA + diphosphate. The protein operates within cofactor biosynthesis; coenzyme A biosynthesis; CoA from (R)-pantothenate: step 4/5. In terms of biological role, reversibly transfers an adenylyl group from ATP to 4'-phosphopantetheine, yielding dephospho-CoA (dPCoA) and pyrophosphate. The sequence is that of Phosphopantetheine adenylyltransferase from Paraburkholderia phytofirmans (strain DSM 17436 / LMG 22146 / PsJN) (Burkholderia phytofirmans).